The chain runs to 250 residues: Agamous-like MADS-box protein AGL8 homolog (250 aa).

Residues 3-57 form the MADS-box domain; that stretch reads RGRVQLKRIENKINRQVTFSKRRSGLLKKAHEISVLCDAEVGLIVFSTKGKLFEY. A K-box domain is found at 88-178; it reads PGSWTLENAK…SKKVKEREKE (91 aa). 2 disordered regions span residues 162-191 and 206-241; these read QEQNNQLSKKVKEREKEVEQQNQWDQQNHE and PHLGEASQNTNVVDNGEVEGGNSSQXQGAANNTVMP. The segment covering 171–180 has biased composition (basic and acidic residues); it reads KVKEREKEVE. 2 stretches are compositionally biased toward polar residues: residues 181–191 and 226–240; these read QQNQWDQQNHE and GNSSQXQGAANNTVM.

It is found in the nucleus. Probable transcription factor. This is Agamous-like MADS-box protein AGL8 homolog (SCM1) from Solanum commersonii (Commerson's wild potato).